The chain runs to 186 residues: ATP synthase subunit b' (186 aa).

A helical membrane pass occupies residues 39 to 59; the sequence is IFWLLLALGAIYWLLKNIAIP.

The protein belongs to the ATPase B chain family. As to quaternary structure, F-type ATPases have 2 components, F(1) - the catalytic core - and F(0) - the membrane proton channel. F(1) has five subunits: alpha(3), beta(3), gamma(1), delta(1), epsilon(1). F(0) has four main subunits: a(1), b(1), b'(1) and c(10-14). The alpha and beta chains form an alternating ring which encloses part of the gamma chain. F(1) is attached to F(0) by a central stalk formed by the gamma and epsilon chains, while a peripheral stalk is formed by the delta, b and b' chains.

It is found in the cellular chromatophore membrane. In terms of biological role, f(1)F(0) ATP synthase produces ATP from ADP in the presence of a proton or sodium gradient. F-type ATPases consist of two structural domains, F(1) containing the extramembraneous catalytic core and F(0) containing the membrane proton channel, linked together by a central stalk and a peripheral stalk. During catalysis, ATP synthesis in the catalytic domain of F(1) is coupled via a rotary mechanism of the central stalk subunits to proton translocation. Its function is as follows. Component of the F(0) channel, it forms part of the peripheral stalk, linking F(1) to F(0). The b'-subunit is a diverged and duplicated form of b found in plants and photosynthetic bacteria. The protein is ATP synthase subunit b' of Rhodobacter capsulatus (Rhodopseudomonas capsulata).